The sequence spans 273 residues: SPbeta prophage-derived uncharacterized protein YomF (273 aa).

The stretch at 119-149 (VIETLQGLIDEAEDTIIRMNERIAECERVTK) forms a coiled coil.

This chain is SPbeta prophage-derived uncharacterized protein YomF (yomF), found in Bacillus subtilis (strain 168).